A 456-amino-acid chain; its full sequence is Glutamyl-tRNA reductase (456 aa).

Substrate is bound by residues 49-52, serine 109, 114-116, and glutamine 120; these read TCNR and EQQ. Residue cysteine 50 is the Nucleophile of the active site. 189–194 is a binding site for NADP(+); that stretch reads GAGSMG.

The protein belongs to the glutamyl-tRNA reductase family. As to quaternary structure, homodimer.

The catalysed reaction is (S)-4-amino-5-oxopentanoate + tRNA(Glu) + NADP(+) = L-glutamyl-tRNA(Glu) + NADPH + H(+). It functions in the pathway porphyrin-containing compound metabolism; protoporphyrin-IX biosynthesis; 5-aminolevulinate from L-glutamyl-tRNA(Glu): step 1/2. Functionally, catalyzes the NADPH-dependent reduction of glutamyl-tRNA(Glu) to glutamate 1-semialdehyde (GSA). The protein is Glutamyl-tRNA reductase of Mycolicibacterium vanbaalenii (strain DSM 7251 / JCM 13017 / BCRC 16820 / KCTC 9966 / NRRL B-24157 / PYR-1) (Mycobacterium vanbaalenii).